Here is a 344-residue protein sequence, read N- to C-terminus: Heat-inducible transcription repressor hrcA (344 aa).

It belongs to the HrcA family.

Negative regulator of class I heat shock genes (grpE-dnaK-dnaJ and groELS operons). Prevents heat-shock induction of these operons. This is Heat-inducible transcription repressor hrcA from Streptococcus pyogenes serotype M3 (strain ATCC BAA-595 / MGAS315).